The following is a 107-amino-acid chain: Integration host factor (107 aa).

Positions 1–20 (MALPPLTPEQRAAALEKAAA) are disordered. A compositionally biased stretch (low complexity) spans 9-18 (EQRAAALEKA). Lysine 54 contributes to the DNA binding site. The H2TH motif, binds DNA motif lies at 64–71 (LPGVGKVR). Residues serine 82, arginine 85, arginine 88, serine 92, asparagine 93, and glutamine 94 each coordinate DNA. The lid, binds DNA stretch occupies residues 82-94 (SESRRVRGLGSNQ).

The protein belongs to the actinobacterial IHF (aIHF) family. Monomer.

The protein localises to the cytoplasm. It localises to the spore. The protein resides in the nucleoid. Its function is as follows. A nucleoid-associated protein (NAP) that probably plays a role in chromosome compactation. Contributes to development and secondary metabolism, but is dispensable for growth and viability. Binds to the promoter region of a number of genes (including itself); multiple molecules of the protein bind to the DNA simultaneously, deletion alters the expression of about 30 genes (both up- and down-regulation occurs). Plays a role in controlling viability. Binds dsDNA without any obvious sequence specificity, in a concentration and length-dependent manner. Promotes supercoiling in a topoisomerase-dependent manner (counteracts TopA plasmid relaxation). Binds DNA as a monomer, contacting 8 base pairs via the phosphate backbone; each monomer can bind 2 DNA duplexes, allowing a bridging function. Alters DNA topology, constraining negative supercoils, possibly by DNA twist. Longer dsDNA binds more than one sIHF subunit. The polypeptide is Integration host factor (Streptomyces coelicolor (strain ATCC BAA-471 / A3(2) / M145)).